The following is a 669-amino-acid chain: Probable serine/threonine-protein kinase DDB_G0291918 (669 aa).

In terms of domain architecture, Protein kinase spans 13 to 360 (YNNIKELGRG…LKETLNHPFL (348 aa)). Residues 19 to 27 (LGRGVSGVV) and K42 each bind ATP. The active-site Proton acceptor is D141. Over residues 396–405 (QNQQQQQQQQ) the composition is skewed to low complexity. Disordered regions lie at residues 396–518 (QNQQ…APTF) and 530–550 (FPKLLPPPTKDAPPLETMNWR). Over residues 406 to 418 (KSFSTSSLPQVNH) the composition is skewed to polar residues. Low complexity-rich tracts occupy residues 419–449 (NNDTNNNNNNNNNNNNNNNNNNNNNNNNNNN) and 457–494 (QSNNSSSSSSSSSPPSPTISKSSPSSLSSSLSPSSSTD).

It belongs to the protein kinase superfamily. Ser/Thr protein kinase family.

The enzyme catalyses L-seryl-[protein] + ATP = O-phospho-L-seryl-[protein] + ADP + H(+). It carries out the reaction L-threonyl-[protein] + ATP = O-phospho-L-threonyl-[protein] + ADP + H(+). In Dictyostelium discoideum (Social amoeba), this protein is Probable serine/threonine-protein kinase DDB_G0291918.